A 236-amino-acid chain; its full sequence is Glyoxalase 3 (236 aa).

Residues Cys-136, His-137, and Glu-168 contribute to the active site. At Cys-136 the chain carries Cysteine sulfinic acid (-SO2H).

It belongs to the peptidase C56 family. HSP31-like subfamily. In terms of assembly, monomer.

It carries out the reaction methylglyoxal + H2O = (R)-lactate + H(+). Functionally, catalyzes the conversion of methylglyoxal (MG) to D-lactate in a single glutathione (GSH)-independent step. Selective for MG, does not use glyoxal as substrate. Plays a role in detoxifying endogenously produced MG, particularly when glycerol is the principal carbon source. Important for viability in stationary phase. In Candida albicans (strain SC5314 / ATCC MYA-2876) (Yeast), this protein is Glyoxalase 3.